The primary structure comprises 625 residues: tRNA (uracil-5-)-methyltransferase homolog A (625 aa).

2 disordered regions span residues 1 to 37 (MSEN…AAPA) and 145 to 165 (RPKA…EPPV). The span at 27-37 (PTVSVPPAAPA) shows a compositional bias: low complexity. Residues 73–146 (FKLELQNVPR…RPLSVRLARP (74 aa)) enclose the RRM domain. Residues 180-209 (YAEQLERKQLECEQVLQKLAKEIGSTNRAL) adopt a coiled-coil conformation. S378 bears the Phosphoserine mark. 3 residues coordinate S-adenosyl-L-methionine: Q411, E461, and D510. Residue C538 is the Nucleophile of the active site. Catalysis depends on E581, which acts as the Proton acceptor. A disordered region spans residues 594–625 (GTGVLGPHSPPAQPTPGPPDNTLQETGTFPSS). The span at 601–612 (HSPPAQPTPGPP) shows a compositional bias: pro residues. A Phosphoserine modification is found at S602. Positions 614–625 (NTLQETGTFPSS) are enriched in polar residues.

The protein belongs to the class I-like SAM-binding methyltransferase superfamily. RNA M5U methyltransferase family.

Its subcellular location is the cytoplasm. It is found in the cytosol. The catalysed reaction is uridine(54) in tRNA + S-adenosyl-L-methionine = 5-methyluridine(54) in tRNA + S-adenosyl-L-homocysteine + H(+). The enzyme catalyses a uridine in mRNA + S-adenosyl-L-methionine = a 5-methyluridine in mRNA + S-adenosyl-L-homocysteine + H(+). Its function is as follows. S-adenosyl-L-methionine-dependent methyltransferase that catalyzes the formation of 5-methyl-uridine in tRNAs and some mRNAs. Mainly catalyzes the methylation of uridine at position 54 (m5U54) in cytosolic tRNAs. Also able to mediate the formation of 5-methyl-uridine in some mRNAs. This is tRNA (uracil-5-)-methyltransferase homolog A from Homo sapiens (Human).